The sequence spans 475 residues: Probable sensor histidine kinase TcrY (475 aa).

Over 1 to 153 the chain is Extracellular; that stretch reads MGITAATEMA…NVDATMLQML (153 aa). The chain crosses the membrane as a helical span at residues 154–174; sequence IIFGIVTVIALVAATTAGIVI. Over 175–475 the chain is Cytoplasmic; that stretch reads IKRALAPLRR…GWQPLESSPR (301 aa). The region spanning 176–238 is the HAMP domain; that stretch reads KRALAPLRRV…MLDHIAAALS (63 aa). One can recognise a Histidine kinase domain in the interval 253–466; sequence DASHELRTPL…EFAVRLPLDG (214 aa). His256 carries the phosphohistidine; by autocatalysis modification.

Homodimer. The cofactor is a divalent metal cation. Post-translationally, autophosphorylated.

Its subcellular location is the cell membrane. It carries out the reaction ATP + protein L-histidine = ADP + protein N-phospho-L-histidine.. In terms of biological role, member of the two-component regulatory system TcrY/TcrX. Activates TcrX by phosphorylation. The chain is Probable sensor histidine kinase TcrY (tcrY) from Mycobacterium tuberculosis (strain ATCC 25618 / H37Rv).